A 154-amino-acid polypeptide reads, in one-letter code: Transcriptional repressor NrdR (154 aa).

The segment at 3–34 (CPTCKYNGTRVVDSRPADDGNSIRRRRECEKC) is a zinc-finger region. Positions 49-139 (LIVVKKDGAR…VYRQFKDISV (91 aa)) constitute an ATP-cone domain.

This sequence belongs to the NrdR family. The cofactor is Zn(2+).

Functionally, negatively regulates transcription of bacterial ribonucleotide reductase nrd genes and operons by binding to NrdR-boxes. The chain is Transcriptional repressor NrdR from Listeria innocua serovar 6a (strain ATCC BAA-680 / CLIP 11262).